Reading from the N-terminus, the 225-residue chain is uncharacterized protein (225 aa).

This is an uncharacterized protein from Schizosaccharomyces pombe (strain 972 / ATCC 24843) (Fission yeast).